Here is a 682-residue protein sequence, read N- to C-terminus: Methionine--tRNA ligase (682 aa).

A 'HIGH' region motif is present at residues Pro14–His24. Cys145, Cys148, Cys158, and Cys161 together coordinate Zn(2+). The short motif at Lys331–Ser335 is the 'KMSKS' region element. Lys334 serves as a coordination point for ATP. Positions Ala580–Lys682 constitute a tRNA-binding domain.

This sequence belongs to the class-I aminoacyl-tRNA synthetase family. MetG type 1 subfamily. Homodimer. Requires Zn(2+) as cofactor.

The protein localises to the cytoplasm. It carries out the reaction tRNA(Met) + L-methionine + ATP = L-methionyl-tRNA(Met) + AMP + diphosphate. Its function is as follows. Is required not only for elongation of protein synthesis but also for the initiation of all mRNA translation through initiator tRNA(fMet) aminoacylation. The chain is Methionine--tRNA ligase from Pseudomonas syringae pv. syringae (strain B728a).